The chain runs to 353 residues: Histidinol-phosphate aminotransferase (353 aa).

Lys218 bears the N6-(pyridoxal phosphate)lysine mark.

It belongs to the class-II pyridoxal-phosphate-dependent aminotransferase family. Histidinol-phosphate aminotransferase subfamily. Homodimer. Pyridoxal 5'-phosphate is required as a cofactor.

It carries out the reaction L-histidinol phosphate + 2-oxoglutarate = 3-(imidazol-4-yl)-2-oxopropyl phosphate + L-glutamate. Its pathway is amino-acid biosynthesis; L-histidine biosynthesis; L-histidine from 5-phospho-alpha-D-ribose 1-diphosphate: step 7/9. This Synechococcus sp. (strain JA-2-3B'a(2-13)) (Cyanobacteria bacterium Yellowstone B-Prime) protein is Histidinol-phosphate aminotransferase.